A 335-amino-acid polypeptide reads, in one-letter code: MRSAKKLLSVLCLGVFILTFTACDMVEKTPEAKAKSTIAKVNGEKIQRKDLDENPRFKQVVSQMKMQYGEEFEKSEQGKEVIKEQKSQILDELITEKVLLQKGKELKVIPKDEELNKEADKKVNEIKAVYNNDEKKFEETLKSTGFTKETLKEYLKDQIVIEKVINEATKGVKVEDKDAQKYYNENQSMFTEKPNTMNVSHILVKTEDEAKKVKKRLDAKEDFAKVAKEVSQDGSKDKGGLLGDISYSDSNLDPTFLKAAIALKEGAISNPVHTQFGYHIIKINSKKEYPVKKFDAVKEDIKKQLKQEKQQEAYTKKIEEWKKASKIKIYEKNLL.

Positions 1–22 are cleaved as a signal peptide; it reads MRSAKKLLSVLCLGVFILTFTA. A lipid anchor (N-palmitoyl cysteine) is attached at Cys-23. A lipid anchor (S-diacylglycerol cysteine) is attached at Cys-23. A PpiC domain is found at 194 to 285; that stretch reads PNTMNVSHIL…FGYHIIKINS (92 aa).

It belongs to the PrsA family.

Its subcellular location is the cell membrane. The enzyme catalyses [protein]-peptidylproline (omega=180) = [protein]-peptidylproline (omega=0). Plays a major role in protein secretion by helping the post-translocational extracellular folding of several secreted proteins. The sequence is that of Foldase protein PrsA from Clostridium botulinum (strain Loch Maree / Type A3).